A 466-amino-acid chain; its full sequence is Signal recognition particle 54 kDa protein (466 aa).

Residues 104-111 (GLQGSGKT), 184-188 (DTAGR), and 242-245 (TKLD) contribute to the GTP site. Positions 444–466 (MQQGGGGGGGGGGGLGGMGPFGD) are disordered. The span at 446 to 466 (QGGGGGGGGGGGLGGMGPFGD) shows a compositional bias: gly residues.

The protein belongs to the GTP-binding SRP family. SRP54 subfamily. In terms of assembly, part of the signal recognition particle protein translocation system, which is composed of SRP and FtsY. Archaeal SRP consists of a 7S RNA molecule of 300 nucleotides and two protein subunits: SRP54 and SRP19.

Its subcellular location is the cytoplasm. It catalyses the reaction GTP + H2O = GDP + phosphate + H(+). In terms of biological role, involved in targeting and insertion of nascent membrane proteins into the cytoplasmic membrane. Binds to the hydrophobic signal sequence of the ribosome-nascent chain (RNC) as it emerges from the ribosomes. The SRP-RNC complex is then targeted to the cytoplasmic membrane where it interacts with the SRP receptor FtsY. The chain is Signal recognition particle 54 kDa protein from Natronomonas pharaonis (strain ATCC 35678 / DSM 2160 / CIP 103997 / JCM 8858 / NBRC 14720 / NCIMB 2260 / Gabara) (Halobacterium pharaonis).